We begin with the raw amino-acid sequence, 127 residues long: Large ribosomal subunit protein bL17 (127 aa).

It belongs to the bacterial ribosomal protein bL17 family. Part of the 50S ribosomal subunit. Contacts protein L32.

The protein is Large ribosomal subunit protein bL17 of Legionella pneumophila (strain Paris).